Reading from the N-terminus, the 103-residue chain is MYAVFQSGGKQHRVSEGQVVRLEKLEVATGETVEFDSVLMIVNGEDVKIGAPVVAGGKVVAEVVAHGRGDKVKIVKFRRRKHSRKQQGHRQWFTEVKITGIQA.

This sequence belongs to the bacterial ribosomal protein bL21 family. In terms of assembly, part of the 50S ribosomal subunit. Contacts protein L20.

In terms of biological role, this protein binds to 23S rRNA in the presence of protein L20. The polypeptide is Large ribosomal subunit protein bL21 (Pasteurella multocida (strain Pm70)).